Here is a 300-residue protein sequence, read N- to C-terminus: Free fatty acid receptor 1 (300 aa).

Topologically, residues 1-8 (MDLPPQLS) are extracellular. Residues 9–31 (FALYVSAFALGFPLNLLAIRGAV) traverse the membrane as a helical segment. Topologically, residues 32–41 (SHAKLRLTPS) are cytoplasmic. The helical transmembrane segment at 42–64 (LVYTLHLGCSDLLLAITLPLKAV) threads the bilayer. Topologically, residues 65 to 79 (EALASGAWPLPLPFC) are extracellular. A disulfide bridge connects residues Cys-79 and Cys-170. Residues 80-101 (PVFALAHFAPLYAGGGFLAALS) traverse the membrane as a helical segment. The Cytoplasmic segment spans residues 102–121 (AGRYLGAAFPFGYQAIRRPR). The chain crosses the membrane as a helical span at residues 122–142 (YSWGVCVAIWALVLCHLGLAL). The Extracellular segment spans residues 143 to 178 (GLETSGSWLDNSTSSLGINIPVNGSPVCLEAWDPDS). Asn-153 carries N-linked (GlcNAc...) asparagine glycosylation. Residues 179–200 (ARPARLSFSILLFFLPLVITAF) form a helical membrane-spanning segment. Residues 201–223 (CYVGCLRALVRSGLSHKRKLRAA) lie on the Cytoplasmic side of the membrane. Residues 224–248 (WVAGGALLTLLLCLGPYNASNVASF) traverse the membrane as a helical segment. Residues 249-256 (INPDLGGS) lie on the Extracellular side of the membrane. The chain crosses the membrane as a helical span at residues 257–279 (WRKLGLITGAWSVVLNPLVTGYL). Over 280 to 300 (GTGPGRGTICVTRTQRGTIQK) the chain is Cytoplasmic.

It belongs to the G-protein coupled receptor 1 family. Expressed in pancreatic islet beta cells (at protein level). Expressed in pancreatic islet beta cells.

The protein resides in the cell membrane. Is also activated by synthetic agonists, such as AM-8182, AM-6331 and TAK-875 (fasiglifam). AM-8182 is a full agonist, while AM-6331 and TAK-875 (fasiglifam) are partial agonists that potentiate the activity of the endogenous ligands, such as alpha-linolenic acid and gamma-linolenic acid. G-protein coupled receptor for medium and long chain saturated and unsaturated fatty acids that plays an important role in glucose homeostasis. Fatty acid binding increases glucose-stimulated insulin secretion, and may also enhance the secretion of glucagon-like peptide 1 (GLP-1). May also play a role in bone homeostasis; receptor signaling activates pathways that inhibit osteoclast differentiation. Ligand binding leads to a conformation change that triggers signaling via G-proteins that activate phospholipase C, leading to an increase of the intracellular calcium concentration. Seems to act through a G(q) and G(i)-mediated pathway. Mediates the anti-inflammatory effects of omega-3 polyunsaturated fatty acids (PUFAs) via inhibition of NLRP3 inflammasome activation. In Mus musculus (Mouse), this protein is Free fatty acid receptor 1 (Ffar1).